Reading from the N-terminus, the 202-residue chain is PXMP2/4 family protein 1 (202 aa).

The next 4 helical transmembrane spans lie at 21–41, 54–72, 138–154, and 161–177; these read PVIT…TLAQ, LMMC…HFWF, KAWM…FRFV, and LISN…LSTV.

It belongs to the peroxisomal membrane protein PXMP2/4 family.

It localises to the membrane. This chain is PXMP2/4 family protein 1, found in Dictyostelium discoideum (Social amoeba).